A 4563-amino-acid polypeptide reads, in one-letter code: MDPPRPALLALLALPALLLLLLAGARAEEEMLENVSLVCPKDATRFKHLRKYTYNYEAESSSGVPGTADSRSATRINCKVELEVPQLCSFILKTSQCTLKEVYGFNPEGKALLKKTKNSEEFAAAMSRYELKLAIPEGKQVFLYPEKDEPTYILNIKRGIISALLVPPETEEAKQVLFLDTVYGNCSTHFTVKTRKGNVATEISTERDLGQCDRFKPIRTGISPLALIKGMTRPLSTLISSSQSCQYTLDAKRKHVAEAICKEQHLFLPFSYKNKYGMVAQVTQTLKLEDTPKINSRFFGEGTKKMGLAFESTKSTSPPKQAEAVLKTLQELKKLTISEQNIQRANLFNKLVTELRGLSDEAVTSLLPQLIEVSSPITLQALVQCGQPQCSTHILQWLKRVHANPLLIDVVTYLVALIPEPSAQQLREIFNMARDQRSRATLYALSHAVNNYHKTNPTGTQELLDIANYLMEQIQDDCTGDEDYTYLILRVIGNMGQTMEQLTPELKSSILKCVQSTKPSLMIQKAAIQALRKMEPKDKDQEVLLQTFLDDASPGDKRLAAYLMLMRSPSQADINKIVQILPWEQNEQVKNFVASHIANILNSEELDIQDLKKLVKEALKESQLPTVMDFRKFSRNYQLYKSVSLPSLDPASAKIEGNLIFDPNNYLPKESMLKTTLTAFGFASADLIEIGLEGKGFEPTLEALFGKQGFFPDSVNKALYWVNGQVPDGVSKVLVDHFGYTKDDKHEQDMVNGIMLSVEKLIKDLKSKEVPEARAYLRILGEELGFASLHDLQLLGKLLLMGARTLQGIPQMIGEVIRKGSKNDFFLHYIFMENAFELPTGAGLQLQISSSGVIAPGAKAGVKLEVANMQAELVAKPSVSVEFVTNMGIIIPDFARSGVQMNTNFFHESGLEAHVALKAGKLKFIIPSPKRPVKLLSGGNTLHLVSTTKTEVIPPLIENRQSWSVCKQVFPGLNYCTSGAYSNASSTDSASYYPLTGDTRLELELRPTGEIEQYSVSATYELQREDRALVDTLKFVTQAEGAKQTEATMTFKYNRQSMTLSSEVQIPDFDVDLGTILRVNDESTEGKTSYRLTLDIQNKKITEVALMGHLSCDTKEERKIKGVISIPRLQAEARSEILAHWSPAKLLLQMDSSATAYGSTVSKRVAWHYDEEKIEFEWNTGTNVDTKKMTSNFPVDLSDYPKSLHMYANRLLDHRVPQTDMTFRHVGSKLIVAMSSWLQKASGSLPYTQTLQDHLNSLKEFNLQNMGLPDFHIPENLFLKSDGRVKYTLNKNSLKIEIPLPFGGKSSRDLKMLETVRTPALHFKSVGFHLPSREFQVPTFTIPKLYQLQVPLLGVLDLSTNVYSNLYNWSASYSGGNTSTDHFSLRARYHMKADSVVDLLSYNVQGSGETTYDHKNTFTLSCDGSLRHKFLDSNIKFSHVEKLGNNPVSKGLLIFDASSSWGPQMSASVHLDSKKKQHLFVKEVKIDGQFRVSSFYAKGTYGLSCQRDPNTGRLNGESNLRFNSSYLQGTNQITGRYEDGTLSLTSTSDLQSGIIKNTASLKYENYELTLKSDTNGKYKNFATSNKMDMTFSKQNALLRSEYQADYESLRFFSLLSGSLNSHGLELNADILGTDKINSGAHKATLRIGQDGISTSATTNLKCSLLVLENELNAELGLSGASMKLTTNGRFREHNAKFSLDGKAALTELSLGSAYQAMILGVDSKNIFNFKVSQEGLKLSNDMMGSYAEMKFDHTNSLNIAGLSLDFSSKLDNIYSSDKFYKQTVNLQLQPYSLVTTLNSDLKYNALDLTNNGKLRLEPLKLHVAGNLKGAYQNNEIKHIYAISSAALSASYKADTVAKVQGVEFSHRLNTDIAGLASAIDMSTNYNSDSLHFSNVFRSVMAPFTMTIDAHTNGNGKLALWGEHTGQLYSKFLLKAEPLAFTFSHDYKGSTSHHLVSRKSISAALEHKVSALLTPAEQTGTWKLKTQFNNNEYSQDLDAYNTKDKIGVELTGRTLADLTLLDSPIKVPLLLSEPINIIDALEMRDAVEKPQEFTIVAFVKYDKNQDVHSINLPFFETLQEYFERNRQTIIVVLENVQRNLKHINIDQFVRKYRAALGKLPQQANDYLNSFNWERQVSHAKEKLTALTKKYRITENDIQIALDDAKINFNEKLSQLQTYMIQFDQYIKDSYDLHDLKIAIANIIDEIIEKLKSLDEHYHIRVNLVKTIHDLHLFIENIDFNKSGSSTASWIQNVDTKYQIRIQIQEKLQQLKRHIQNIDIQHLAGKLKQHIEAIDVRVLLDQLGTTISFERINDILEHVKHFVINLIGDFEVAEKINAFRAKVHELIERYEVDQQIQVLMDKLVELAHQYKLKETIQKLSNVLQQVKIKDYFEKLVGFIDDAVKKLNELSFKTFIEDVNKFLDMLIKKLKSFDYHQFVDETNDKIREVTQRLNGEIQALELPQKAEALKLFLEETKATVAVYLESLQDTKITLIINWLQEALSSASLAHMKAKFRETLEDTRDRMYQMDIQQELQRYLSLVGQVYSTLVTYISDWWTLAAKNLTDFAEQYSIQDWAKRMKALVEQGFTVPEIKTILGTMPAFEVSLQALQKATFQTPDFIVPLTDLRIPSVQINFKDLKNIKIPSRFSTPEFTILNTFHIPSFTIDFVEMKVKIIRTIDQMLNSELQWPVPDIYLRDLKVEDIPLARITLPDFRLPEIAIPEFIIPTLNLNDFQVPDLHIPEFQLPHISHTIEVPTFGKLYSILKIQSPLFTLDANADIGNGTTSANEAGIAASITAKGESKLEVLNFDFQANAQLSNPKINPLALKESVKFSSKYLRTEHGSEMLFFGNAIEGKSNTVASLHTEKNTLELSNGVIVKINNQLTLDSNTKYFHKLNIPKLDFSSQADLRNEIKTLLKAGHIAWTSSGKGSWKWACPRFSDEGTHESQISFTIEGPLTSFGLSNKINSKHLRVNQNLVYESGSLNFSKLEIQSQVDSQHVGHSVLTAKGMALFGEGKAEFTGRHDAHLNGKVIGTLKNSLFFSAQPFEITASTNNEGNLKVRFPLRLTGKIDFLNNYALFLSPSAQQASWQVSARFNQYKYNQNFSAGNNENIMEAHVGINGEANLDFLNIPLTIPEMRLPYTIITTPPLKDFSLWEKTGLKEFLKTTKQSFDLSVKAQYKKNKHRHSITNPLAVLCEFISQSIKSFDRHFEKNRNNALDFVTKSYNETKIKFDKYKAEKSHDELPRTFQIPGYTVPVVNVEVSPFTIEMSAFGYVFPKAVSMPSFSILGSDVRVPSYTLILPSLELPVLHVPRNLKLSLPDFKELCTISHIFIPAMGNITYDFSFKSSVITLNTNAELFNQSDIVAHLLSSSSSVIDALQYKLEGTTRLTRKRGLKLATALSLSNKFVEGSHNSTVSLTTKNMEVSVATTTKAQIPILRMNFKQELNGNTKSKPTVSSSMEFKYDFNSSMLYSTAKGAVDHKLSLESLTSYFSIESSTKGDVKGSVLSREYSGTIASEANTYLNSKSTRSSVKLQGTSKIDDIWNLEVKENFAGEATLQRIYSLWEHSTKNHLQLEGLFFTNGEHTSKATLELSPWQMSALVQVHASQPSSFHDFPDLGQEVALNANTKNQKIRWKNEVRIHSGSFQSQVELSNDQEKAHLDIAGSLEGHLRFLKNIILPVYDKSLWDFLKLDVTTSIGRRQHLRVSTAFVYTKNPNGYSFSIPVKVLADKFIIPGLKLNDLNSVLVMPTFHVPFTDLQVPSCKLDFREIQIYKKLRTSSFALNLPTLPEVKFPEVDVLTKYSQPEDSLIPFFEITVPESQLTVSQFTLPKSVSDGIAALDLNAVANKIADFELPTIIVPEQTIEIPSIKFSVPAGIVIPSFQALTARFEVDSPVYNATWSASLKNKADYVETVLDSTCSSTVQFLEYELNVLGTHKIEDGTLASKTKGTFAHRDFSAEYEEDGKYEGLQEWEGKAHLNIKSPAFTDLHLRYQKDKKGISTSAASPAVGTVGMDMDEDDDFSKWNFYYSPQSSPDKKLTIFKTELRVRESDEETQIKVNWEEEAASGLLTSLKDNVPKATGVLYDYVNKYHWEHTGLTLREVSSKLRRNLQNNAEWVYQGAIRQIDDIDVRFQKAASGTTGTYQEWKDKAQNLYQELLTQEGQASFQGLKDNVFDGLVRVTQEFHMKVKHLIDSLIDFLNFPRFQFPGKPGIYTREELCTMFIREVGTVLSQVYSKVHNGSEILFSYFQDLVITLPFELRKHKLIDVISMYRELLKDLSKEAQEVFKAIQSLKTTEVLRNLQDLLQFIFQLIEDNIKQLKEMKFTYLINYIQDEINTIFSDYIPYVFKLLKENLCLNLHKFNEFIQNELQEASQELQQIHQYIMALREEYFDPSIVGWTVKYYELEEKIVSLIKNLLVALKDFHSEYIVSASNFTSQLSSQVEQFLHRNIQEYLSILTDPDGKGKEKIAELSATAQEIIKSQAIATKKIISDYHQQFRYKLQDFSDQLSDYYEKFIAESKRLIDLSIQNYHTFLIYITELLKKLQSTTVMNPYMKLAPGELTIIL.

Positions 1-27 (MDPPRPALLALLALPALLLLLLAGARA) are cleaved as a signal peptide. The interval 32–126 (LENVSLVCPK…KNSEEFAAAM (95 aa)) is heparin-binding. The N-linked (GlcNAc...) asparagine glycan is linked to N34. Intrachain disulfides connect C39–C88 and C78–C97. Residues 46–672 (FKHLRKYTYN…PNNYLPKESM (627 aa)) form the Vitellogenin domain. N185 carries N-linked (GlcNAc...) asparagine glycosylation. 4 disulfides stabilise this stretch: C186-C212, C245-C261, C385-C390, and C478-C513. Residues 232–306 (TRPLSTLISS…RFFGEGTKKM (75 aa)) form a heparin-binding region. The interval 902-959 (NTNFFHESGLEAHVALKAGKLKFIIPSPKRPVKLLSGGNTLHLVSTTKTEVIPPLIEN) is heparin-binding. A disulfide bridge links C966 with C976. N983 is a glycosylation site (N-linked (GlcNAc...) asparagine). C1112 carries the S-palmitoyl cysteine lipid modification. N1368, N1377, and N1523 each carry an N-linked (GlcNAc...) asparagine glycan. K2004 is modified (N6-acetyllysine). The heparin-binding stretch occupies residues 2043–2178 (RDAVEKPQEF…EKLSQLQTYM (136 aa)). N-linked (GlcNAc...) asparagine glycans are attached at residues N2239, N2560, N2779, N2982, and N3101. The tract at residues 3161–3236 (FLKTTKQSFD…KIKFDKYKAE (76 aa)) is heparin-binding. The basic (possible receptor binding region) stretch occupies residues 3174–3184 (KAQYKKNKHRH). A disulfide bridge links C3194 with C3324. N-linked (GlcNAc...) asparagine glycosylation occurs at N3224. S3279 carries the post-translational modification Phosphoserine. N-linked (GlcNAc...) asparagine glycans are attached at residues N3336 and N3358. Residues 3373-3393 (VIDALQYKLEGTTRLTRKRGL) form an LDL receptor binding region. A heparin-binding region spans residues 3383–3516 (GTTRLTRKRG…REYSGTIASE (134 aa)). The basic (possible receptor binding region) stretch occupies residues 3386–3394 (RLTRKRGLK). N3411, N3465, and N3895 each carry an N-linked (GlcNAc...) asparagine glycan. S4048 bears the Phosphoserine; by FAM20C mark. T4052 carries the phosphothreonine modification. N-linked (GlcNAc...) asparagine glycosylation is found at N4237 and N4431.

Interacts with PCSK9. Interacts with MTTP. Interacts with AUP1. Interacts with CIDEB. In terms of processing, palmitoylated; structural requirement for proper assembly of the hydrophobic core of the lipoprotein particle.

The protein localises to the cytoplasm. It localises to the secreted. Its subcellular location is the lipid droplet. Apolipoprotein B is a major protein constituent of chylomicrons (apo B-48), LDL (apo B-100) and VLDL (apo B-100). Apo B-100 functions as a recognition signal for the cellular binding and internalization of LDL particles by the apoB/E receptor. This Homo sapiens (Human) protein is Apolipoprotein B-100 (APOB).